Reading from the N-terminus, the 523-residue chain is Synaptotagmin-10 (523 aa).

Residues 1–55 are Vesicular-facing; the sequence is MSFHKEDGVNSLCQKALHIVTELCFAGQVEWEKCSGIFPRDRGSQGGSSTDISVS. Positions 13–35 are cysteine motif; the sequence is CQKALHIVTELCFAGQVEWEKCS. Residues 56 to 76 form a helical membrane-spanning segment; the sequence is LLAVVVSFCGLALLVVSLFVF. Residues 77–523 are Cytoplasmic-facing; the sequence is WKLCWPCWKS…CPSPKPPSTP (447 aa). T136 carries the phosphothreonine modification. C2 domains are found at residues 231–352 and 363–496; these read ICGK…TVWK and DLGE…THWH. 11 residues coordinate Ca(2+): D262, D268, D320, F321, D322, S325, D328, D394, D400, D454, and D456.

This sequence belongs to the synaptotagmin family. Homodimer; disulfide-linked via the cysteine motif. Can also form heterodimers with SYT3, SYT6, SYT7 and SYT9. Ca(2+) is required as a cofactor.

The protein resides in the cytoplasmic vesicle. It is found in the secretory vesicle membrane. Ca(2+) sensor specifically required for the Ca(2+)-dependent exocytosis of secretory vesicles containing IGF1 in neurons of the olfactory bulb. Exocytosis of IGF1 is required for sensory perception of smell. Not involved in Ca(2+)-dependent synaptic vesicle exocytosis. Acts through Ca(2+) and phospholipid binding to the C2 domain: Ca(2+) induces binding of the C2-domains to phospholipid membranes and to assembled SNARE-complexes; both actions contribute to triggering exocytosis. The sequence is that of Synaptotagmin-10 (SYT10) from Pongo abelii (Sumatran orangutan).